The following is an 88-amino-acid chain: Probable Fe(2+)-trafficking protein (88 aa).

The protein belongs to the Fe(2+)-trafficking protein family.

Functionally, could be a mediator in iron transactions between iron acquisition and iron-requiring processes, such as synthesis and/or repair of Fe-S clusters in biosynthetic enzymes. This chain is Probable Fe(2+)-trafficking protein, found in Neisseria gonorrhoeae (strain ATCC 700825 / FA 1090).